A 151-amino-acid polypeptide reads, in one-letter code: Methylglyoxal synthase (151 aa).

The MGS-like domain occupies 6–151; that stretch reads RVMPAHKHIA…DYDAYLAERV (146 aa). Substrate contacts are provided by residues His-19, Lys-23, 45–48, and 65–66; these read TGTT and SG. Residue Asp-71 is the Proton donor/acceptor of the active site. Position 98 (His-98) interacts with substrate.

This sequence belongs to the methylglyoxal synthase family.

It catalyses the reaction dihydroxyacetone phosphate = methylglyoxal + phosphate. Its function is as follows. Catalyzes the formation of methylglyoxal from dihydroxyacetone phosphate. The chain is Methylglyoxal synthase from Aliivibrio fischeri (strain ATCC 700601 / ES114) (Vibrio fischeri).